A 114-amino-acid chain; its full sequence is SNF1-related protein kinase regulatory subunit beta-3 (114 aa).

The disordered stretch occupies residues 26–50 (SYNNVYSSTEDETRDPPAVPPHLQH). Residues 40–114 (DPPAVPPHLQ…PVQRRGSANV (75 aa)) form an association with SNF1 complex (ASC) region.

It belongs to the 5'-AMP-activated protein kinase beta subunit family. Subunit of a probable heterotrimeric complex consisting of an alpha catalytic (KIN10 or KIN11) subunit, and a beta (KINB) and a gamma (KING or SNF4) non-catalytic regulatory subunits. Interacts with KIN10, KIN11 and SNF4. Interacts with FLZ1, FLZ2, FLZ3, FLZ4, FLZ5, FLZ7, FLZ8, FLZ10, FLZ13, FLZ14, FLZ15 and FLZ16. As to expression, expressed in rosette (at the protein level). Expressed in the whole plant and at the different developmental stage with a higher level in stems.

Functionally, regulatory subunit of the probable trimeric SNF1-related protein kinase (SnRK) complex, which may play a role in a signal transduction cascade regulating gene expression and carbohydrate metabolism in higher plants. The polypeptide is SNF1-related protein kinase regulatory subunit beta-3 (KINB3) (Arabidopsis thaliana (Mouse-ear cress)).